Reading from the N-terminus, the 140-residue chain is Smith-Magenis syndrome chromosomal region candidate gene 5 protein (140 aa).

The tract at residues 43-77 is disordered; that stretch reads CTGPSSQAPPQPPQASPPAAADHSRTPSLLASSHS. Pro residues predominate over residues 49-58; it reads QAPPQPPQAS.

Widely expressed.

This chain is Smith-Magenis syndrome chromosomal region candidate gene 5 protein (SMCR5), found in Homo sapiens (Human).